A 225-amino-acid chain; its full sequence is Urease accessory protein UreF (225 aa).

The protein belongs to the UreF family. In terms of assembly, ureD, UreF and UreG form a complex that acts as a GTP-hydrolysis-dependent molecular chaperone, activating the urease apoprotein by helping to assemble the nickel containing metallocenter of UreC. The UreE protein probably delivers the nickel.

It is found in the cytoplasm. Required for maturation of urease via the functional incorporation of the urease nickel metallocenter. In Geobacillus kaustophilus (strain HTA426), this protein is Urease accessory protein UreF.